The primary structure comprises 556 residues: Polypeptide N-acetylgalactosaminyltransferase 13 (556 aa).

Topologically, residues 1–4 are cytoplasmic; that stretch reads MRRF. The chain crosses the membrane as a helical; Signal-anchor for type II membrane protein span at residues 5 to 27; that stretch reads VYCKVVLATSLMWVLVDVFLLLY. Residues 28 to 556 are Lumenal-facing; it reads FSECNKCDDK…WLLRNMTLGT (529 aa). N-linked (GlcNAc...) asparagine glycans are attached at residues Asn-94 and Asn-116. Intrachain disulfides connect Cys-105–Cys-338, Cys-329–Cys-407, Cys-441–Cys-458, Cys-481–Cys-496, and Cys-522–Cys-539. Residues 114 to 224 form a catalytic subdomain A region; sequence LPNTSVVIVF…LGWLEPLLAR (111 aa). 2 residues coordinate substrate: Asp-155 and Arg-185. Asp-208 and His-210 together coordinate Mn(2+). Residues 284-346 are catalytic subdomain B; that stretch reads PVRTPTMAGG…TCSHVGHVFR (63 aa). Trp-315 provides a ligand contact to substrate. His-343 is a Mn(2+) binding site. Residues Arg-346 and Tyr-351 each contribute to the substrate site. In terms of domain architecture, Ricin B-type lectin spans 428–550; sequence YSLGEIRNVE…GSRSQQWLLR (123 aa). An N-linked (GlcNAc...) asparagine glycan is attached at Asn-551.

Belongs to the glycosyltransferase 2 family. GalNAc-T subfamily. The cofactor is Mn(2+). As to expression, specifically expressed in neuronal cells. Expressed in fetal brain, whole adult brain, cerebral cortex and cerebellum. Not expressed in other tissues tested.

The protein resides in the golgi apparatus membrane. The enzyme catalyses L-seryl-[protein] + UDP-N-acetyl-alpha-D-galactosamine = a 3-O-[N-acetyl-alpha-D-galactosaminyl]-L-seryl-[protein] + UDP + H(+). It carries out the reaction L-threonyl-[protein] + UDP-N-acetyl-alpha-D-galactosamine = a 3-O-[N-acetyl-alpha-D-galactosaminyl]-L-threonyl-[protein] + UDP + H(+). It functions in the pathway protein modification; protein glycosylation. Catalyzes the initial reaction in O-linked oligosaccharide biosynthesis, the transfer of an N-acetyl-D-galactosamine (GalNAc) residue from UDP-GalNAc to a serine or threonine residue on the protein receptor. Generates GalNAc-O-Ser/Thr structure also known as Tn antigen, which itself is immunogenic but also serves as a precursor for the synthesis of different mucin-type O-glycan core structures. Contributes to the synthesis of O-linked glycans on mucins and proteoglycans of the central nervous system. May promote neurogenesis through glycosylation and stabilization of PDPN. Its function is as follows. Can glycosylate both unmodified peptides and glycopeptides that already contain an O-linked GalNAc sugar. Transfers GalNAc to Thr-/Ser-rich tandem repeats GTTPSPVPTTSTTSAP of MUC5AC, specifically on Thr-3 of non-glycosylated MUC5AC peptide, on Thr-12 and Thr-13 of preglycosylated MUC5AC at Thr-3 (MUC5AC-3), on Thr-3 of preglycosylated MUC5AC at Thr-13 (MUC5AC-13) and on Thr-12 of preglycosylated MUC5AC at Thr-3 and Thr-13 (MUC5AC-3,13). Transfers GalNAc to three consecutive serine/threonine residues on SDC3 forming a triplet-Tn epitope expressed in Purkinje cells of the developing brain. Functionally, can glycosylate both unmodified peptides and glycopeptides that already contain an O-linked GalNAc sugar. Transfers GalNAc to Thr-/Ser-rich tandem repeats GTTPSPVPTTSTTSAP of MUC5AC, specifically on Thr-3 of non-glycosylated MUC5AC peptide, on Thr-12 and Thr-13 of preglycosylated MUC5AC at Thr-3 (MUC5AC-3), on Thr-3 of preglycosylated MUC5AC at Thr-13 (MUC5AC-13) and on Thr-12 of preglycosylated MUC5AC at Thr-3 and Thr-13 (MUC5AC-3,13). The chain is Polypeptide N-acetylgalactosaminyltransferase 13 (GALNT13) from Homo sapiens (Human).